Consider the following 133-residue polypeptide: Holo-[acyl-carrier-protein] synthase (133 aa).

Mg(2+) contacts are provided by Asp-8 and Glu-58.

The protein belongs to the P-Pant transferase superfamily. AcpS family. The cofactor is Mg(2+).

It localises to the cytoplasm. The enzyme catalyses apo-[ACP] + CoA = holo-[ACP] + adenosine 3',5'-bisphosphate + H(+). Functionally, transfers the 4'-phosphopantetheine moiety from coenzyme A to a Ser of acyl-carrier-protein. This is Holo-[acyl-carrier-protein] synthase from Sphingopyxis alaskensis (strain DSM 13593 / LMG 18877 / RB2256) (Sphingomonas alaskensis).